Consider the following 869-residue polypeptide: Aconitate hydratase A (869 aa).

[4Fe-4S] cluster-binding residues include C411, C477, and C480.

Belongs to the aconitase/IPM isomerase family. In terms of assembly, monomer. [4Fe-4S] cluster is required as a cofactor.

It carries out the reaction citrate = D-threo-isocitrate. The catalysed reaction is (2S,3R)-3-hydroxybutane-1,2,3-tricarboxylate = 2-methyl-cis-aconitate + H2O. Its pathway is carbohydrate metabolism; tricarboxylic acid cycle; isocitrate from oxaloacetate: step 2/2. The protein operates within organic acid metabolism; propanoate degradation. Functionally, involved in the catabolism of short chain fatty acids (SCFA) via the tricarboxylic acid (TCA)(acetyl degradation route) and the 2-methylcitrate cycle I (propionate degradation route). Catalyzes the reversible isomerization of citrate to isocitrate via cis-aconitate. Could catalyze the hydration of 2-methyl-cis-aconitate to yield (2S,3R)-2-methylisocitrate. The apo form of AcnA functions as a RNA-binding regulatory protein. In Cupriavidus necator (Alcaligenes eutrophus), this protein is Aconitate hydratase A.